The following is a 434-amino-acid chain: Protein maelstrom homolog (434 aa).

A DNA-binding region (HMG box) is located at residues 4-73 (RRGSRNAYYF…AQGKDAGPWE (70 aa)). The segment at 357–387 (SHFSSSNQEQRSNTPTGDYPSGVKISGQSSS) is disordered. The segment covering 363–372 (NQEQRSNTPT) has biased composition (polar residues).

The protein belongs to the maelstrom family. In terms of assembly, interacts with SMARCB1, SIN3B and DDX4. Interacts with piRNA-associated proteins TDRD1, PIWIL1 and PIWIL2. Interacts with TEX19.

Its subcellular location is the cytoplasm. The protein resides in the nucleus. Functionally, plays a central role during spermatogenesis by repressing transposable elements and preventing their mobilization, which is essential for the germline integrity. Acts via the piRNA metabolic process, which mediates the repression of transposable elements during meiosis by forming complexes composed of piRNAs and Piwi proteins and governs the methylation and subsequent repression of transposons. Its association with piP-bodies suggests a participation in the secondary piRNAs metabolic process. Required for the localization of germ-cell factors to the meiotic nuage. This Sus scrofa (Pig) protein is Protein maelstrom homolog (MAEL).